We begin with the raw amino-acid sequence, 178 residues long: Large ribosomal subunit protein uL6 (178 aa).

The protein belongs to the universal ribosomal protein uL6 family. In terms of assembly, part of the 50S ribosomal subunit.

This protein binds to the 23S rRNA, and is important in its secondary structure. It is located near the subunit interface in the base of the L7/L12 stalk, and near the tRNA binding site of the peptidyltransferase center. This is Large ribosomal subunit protein uL6 from Ligilactobacillus salivarius (strain UCC118) (Lactobacillus salivarius).